A 382-amino-acid polypeptide reads, in one-letter code: Mannitol-1-phosphate 5-dehydrogenase (382 aa).

3–14 (AIHFGAGNIGRG) is an NAD(+) binding site.

Belongs to the mannitol dehydrogenase family.

It carries out the reaction D-mannitol 1-phosphate + NAD(+) = beta-D-fructose 6-phosphate + NADH + H(+). In Psychromonas ingrahamii (strain DSM 17664 / CCUG 51855 / 37), this protein is Mannitol-1-phosphate 5-dehydrogenase.